The chain runs to 536 residues: Cytochrome P450 monooxygenase pbrC (536 aa).

Residues 20-39 (VMLPALVGFAFLIYQAFFAI) form a helical membrane-spanning segment. Cysteine 479 provides a ligand contact to heme.

Belongs to the cytochrome P450 family. The cofactor is heme.

Its subcellular location is the membrane. Its pathway is secondary metabolite biosynthesis; terpenoid biosynthesis. Functionally, cytochrome P450 monooxygenase; part of the gene cluster that mediates the biosynthesis of the sesquiterpenoid aspterric acid (AA), an inhibitor of dihydroxy-acid dehydratase (DHAD) effective as an herbicide. PbrC catalyzes the third and last step within the pathway and converts the alpha-epoxy carboxylate intermediate produced by the cytochrome P450 monooxygenase pbrB from (-)daucane into the tricyclic aspterric acid. This Penicillium brasilianum protein is Cytochrome P450 monooxygenase pbrC.